Consider the following 349-residue polypeptide: Isopentenyl-diphosphate delta-isomerase (349 aa).

9-10 lines the substrate pocket; the sequence is RK. Residues 65 to 67, serine 95, and asparagine 124 each bind FMN; that span reads AMT. 95-97 provides a ligand contact to substrate; sequence STH. Substrate is bound at residue glutamine 154. Glutamate 155 contributes to the Mg(2+) binding site. FMN is bound by residues lysine 186, serine 211, threonine 216, 262-264, and 283-284; these read GLR and SR.

It belongs to the IPP isomerase type 2 family. In terms of assembly, homooctamer. Dimer of tetramers. Requires FMN as cofactor. The cofactor is NADPH. It depends on Mg(2+) as a cofactor.

Its subcellular location is the cytoplasm. It catalyses the reaction isopentenyl diphosphate = dimethylallyl diphosphate. Functionally, involved in the biosynthesis of isoprenoids. Catalyzes the 1,3-allylic rearrangement of the homoallylic substrate isopentenyl (IPP) to its allylic isomer, dimethylallyl diphosphate (DMAPP). This is Isopentenyl-diphosphate delta-isomerase from Staphylococcus aureus (strain MSSA476).